A 162-amino-acid polypeptide reads, in one-letter code: Phosphopantetheine adenylyltransferase (162 aa).

Ser-9 provides a ligand contact to substrate. Residues 9 to 10 and His-17 each bind ATP; that span reads SF. Substrate is bound by residues Lys-41, Leu-73, and Lys-87. ATP is bound by residues 88-90, Glu-98, and 123-129; these read GLR and CSFLSSS.

This sequence belongs to the bacterial CoaD family. As to quaternary structure, homohexamer. Requires Mg(2+) as cofactor.

Its subcellular location is the cytoplasm. It carries out the reaction (R)-4'-phosphopantetheine + ATP + H(+) = 3'-dephospho-CoA + diphosphate. The protein operates within cofactor biosynthesis; coenzyme A biosynthesis; CoA from (R)-pantothenate: step 4/5. Its function is as follows. Reversibly transfers an adenylyl group from ATP to 4'-phosphopantetheine, yielding dephospho-CoA (dPCoA) and pyrophosphate. The protein is Phosphopantetheine adenylyltransferase of Natranaerobius thermophilus (strain ATCC BAA-1301 / DSM 18059 / JW/NM-WN-LF).